A 139-amino-acid chain; its full sequence is Invertebrate-type lysozyme 2 (139 aa).

A signal peptide spans 1-18; sequence MFVKAILLLSIAVAYASA. Positions 19 to 138 constitute an I-type lysozyme domain; sequence DCLHCICMRE…WKGVHSCCGC (120 aa). 7 cysteine pairs are disulfide-bonded: C20–C106, C23–C138, C25–C31, C36–C45, C58–C86, C76–C82, and C98–C120. E28 functions as the Proton donor in the catalytic mechanism. D39 functions as the Nucleophile in the catalytic mechanism. Residue 51-57 coordinates substrate; sequence KIPYYED. Residues Y90 and 113–115 each bind substrate; that span reads HNG.

Belongs to the glycosyl hydrolase 22 family. Type-I lysozyme subfamily. In terms of tissue distribution, expressed in pharyngeal muscle cell pm3, nerve ring and intestine.

The catalysed reaction is Hydrolysis of (1-&gt;4)-beta-linkages between N-acetylmuramic acid and N-acetyl-D-glucosamine residues in a peptidoglycan and between N-acetyl-D-glucosamine residues in chitodextrins.. Its function is as follows. Has bacteriolytic activity against Gram-positive bacteria. May play a role in resistance to Gram-positive bacterium S.aureus infection. The polypeptide is Invertebrate-type lysozyme 2 (Caenorhabditis elegans).